Here is a 146-residue protein sequence, read N- to C-terminus: Large ribosomal subunit protein uL15 (146 aa).

The tract at residues methionine 1–glutamate 51 is disordered. Gly residues-rich tracts occupy residues arginine 21–glutamine 35 and serine 42–glutamate 51.

This sequence belongs to the universal ribosomal protein uL15 family. As to quaternary structure, part of the 50S ribosomal subunit.

Functionally, binds to the 23S rRNA. The sequence is that of Large ribosomal subunit protein uL15 from Geobacillus kaustophilus (strain HTA426).